The following is a 301-amino-acid chain: MEDEVVRIAKKMDKMVQKKNAAGALDLLKELKNIPMTLELLQSTRIGMSVNALRKQSTDEEVTSLAKSLIKSWKKLLDGPSTDKDPEEKKKEPAISSQNSPEAREESSSSSNVSSRKDETNARDTYVSSFPRAPSTSDSVRLKCREMLAAALRTGDDYVAIGADEEELGSQIEEAIYQEIRNTDMKYKNRVRSRISNLKDAKNPNLRKNVLCGNIPPDLFARMTAEEMASDELKEMRKNLTKEAIREHQMAKTGGTQTDLFTCGKCKKKNCTYTQVQTRSADEPMTTFVVCNECGNRWKFC.

At Met1 the chain carries N-acetylmethionine. Residues 3–80 form the TFIIS N-terminal domain; sequence DEVVRIAKKM…KSWKKLLDGP (78 aa). Lys55 is covalently cross-linked (Glycyl lysine isopeptide (Lys-Gly) (interchain with G-Cter in ubiquitin)). Phosphoserine occurs at positions 57, 81, 97, and 100. Residues 76–93 show a composition bias toward basic and acidic residues; sequence LLDGPSTDKDPEEKKKEP. Residues 76–139 are disordered; the sequence is LLDGPSTDKD…FPRAPSTSDS (64 aa). Residues 140-256 form the TFIIS central domain; the sequence is VRLKCREMLA…EHQMAKTGGT (117 aa). A TFIIS-type zinc finger spans residues 259–299; sequence DLFTCGKCKKKNCTYTQVQTRSADEPMTTFVVCNECGNRWK. Zn(2+) contacts are provided by Cys263, Cys266, Cys291, and Cys294.

The protein belongs to the TFS-II family. Interacts with EAF2. Associates with UBR5 and forms a transcription regulatory complex made of CDK9, Pol II, UBR5 and TCEA1/TFIIS. Part of TBP-based Pol II pre-initiation complex (PIC), in which Pol II core assembles with general transcription factors and other specific initiation factors including GTF2E1, GTF2E2, GTF2F1, GTF2F2, TCEA1, ERCC2, ERCC3, GTF2H2, GTF2H3, GTF2H4, GTF2H5, GTF2A1, GTF2A2, GTF2B and TBP; this large multi-subunit PIC complex mediates DNA unwinding and targets Pol II core to the transcription start site where the first phosphodiester bond forms.

It localises to the nucleus. Its function is as follows. Necessary for efficient RNA polymerase II transcription elongation past template-encoded arresting sites. The arresting sites in DNA have the property of trapping a certain fraction of elongating RNA polymerases that pass through, resulting in locked ternary complexes. Cleavage of the nascent transcript by S-II allows the resumption of elongation from the new 3'-terminus. The sequence is that of Transcription elongation factor A protein 1 (Tcea1) from Mus musculus (Mouse).